The primary structure comprises 185 residues: Threonylcarbamoyl-AMP synthase (185 aa).

The region spanning 4–185 (SFRVQQAARE…LATGEVVRPG (182 aa)) is the YrdC-like domain.

Belongs to the SUA5 family. TsaC subfamily.

The protein resides in the cytoplasm. It carries out the reaction L-threonine + hydrogencarbonate + ATP = L-threonylcarbamoyladenylate + diphosphate + H2O. Required for the formation of a threonylcarbamoyl group on adenosine at position 37 (t(6)A37) in tRNAs that read codons beginning with adenine. Catalyzes the conversion of L-threonine, HCO(3)(-)/CO(2) and ATP to give threonylcarbamoyl-AMP (TC-AMP) as the acyladenylate intermediate, with the release of diphosphate. In Pseudomonas putida (strain GB-1), this protein is Threonylcarbamoyl-AMP synthase.